The following is a 445-amino-acid chain: Glucose-6-phosphate isomerase (445 aa).

Glutamate 287 serves as the catalytic Proton donor. Catalysis depends on residues histidine 308 and lysine 422.

Belongs to the GPI family.

The protein localises to the cytoplasm. It carries out the reaction alpha-D-glucose 6-phosphate = beta-D-fructose 6-phosphate. The protein operates within carbohydrate biosynthesis; gluconeogenesis. It functions in the pathway carbohydrate degradation; glycolysis; D-glyceraldehyde 3-phosphate and glycerone phosphate from D-glucose: step 2/4. In terms of biological role, catalyzes the reversible isomerization of glucose-6-phosphate to fructose-6-phosphate. The sequence is that of Glucose-6-phosphate isomerase from Bacteroides fragilis (strain ATCC 25285 / DSM 2151 / CCUG 4856 / JCM 11019 / LMG 10263 / NCTC 9343 / Onslow / VPI 2553 / EN-2).